Reading from the N-terminus, the 152-residue chain is SsrA-binding protein (152 aa).

It belongs to the SmpB family.

The protein resides in the cytoplasm. Required for rescue of stalled ribosomes mediated by trans-translation. Binds to transfer-messenger RNA (tmRNA), required for stable association of tmRNA with ribosomes. tmRNA and SmpB together mimic tRNA shape, replacing the anticodon stem-loop with SmpB. tmRNA is encoded by the ssrA gene; the 2 termini fold to resemble tRNA(Ala) and it encodes a 'tag peptide', a short internal open reading frame. During trans-translation Ala-aminoacylated tmRNA acts like a tRNA, entering the A-site of stalled ribosomes, displacing the stalled mRNA. The ribosome then switches to translate the ORF on the tmRNA; the nascent peptide is terminated with the 'tag peptide' encoded by the tmRNA and targeted for degradation. The ribosome is freed to recommence translation, which seems to be the essential function of trans-translation. The polypeptide is SsrA-binding protein (Rickettsia africae (strain ESF-5)).